A 354-amino-acid chain; its full sequence is Protein RecA (354 aa).

An ATP-binding site is contributed by 67-74; that stretch reads GPESSGKT.

The protein belongs to the RecA family.

It localises to the cytoplasm. In terms of biological role, can catalyze the hydrolysis of ATP in the presence of single-stranded DNA, the ATP-dependent uptake of single-stranded DNA by duplex DNA, and the ATP-dependent hybridization of homologous single-stranded DNAs. It interacts with LexA causing its activation and leading to its autocatalytic cleavage. The sequence is that of Protein RecA from Enterobacter agglomerans (Erwinia herbicola).